The sequence spans 559 residues: CTP synthase (559 aa).

Residues 1 to 270 are amidoligase domain; sequence MTKFVFVTGG…DGLICDKLRI (270 aa). Ser13 provides a ligand contact to CTP. Ser13 provides a ligand contact to UTP. ATP is bound by residues 14 to 19 and Asp71; that span reads SLGKGI. Mg(2+) is bound by residues Asp71 and Glu144. CTP-binding positions include 151–153, 191–196, and Lys227; these read DIE and KTKPTQ. UTP is bound by residues 191–196 and Lys227; that span reads KTKPTQ. Positions 295-547 constitute a Glutamine amidotransferase type-1 domain; it reads SIAMVGKYVD…IKAALDHKAR (253 aa). Gly356 is a binding site for L-glutamine. Cys383 acts as the Nucleophile; for glutamine hydrolysis in catalysis. L-glutamine-binding positions include 384–387, Glu407, and Arg473; that span reads LGMQ. Catalysis depends on residues His520 and Glu522.

Belongs to the CTP synthase family. Homotetramer.

The catalysed reaction is UTP + L-glutamine + ATP + H2O = CTP + L-glutamate + ADP + phosphate + 2 H(+). The enzyme catalyses L-glutamine + H2O = L-glutamate + NH4(+). It carries out the reaction UTP + NH4(+) + ATP = CTP + ADP + phosphate + 2 H(+). The protein operates within pyrimidine metabolism; CTP biosynthesis via de novo pathway; CTP from UDP: step 2/2. With respect to regulation, allosterically activated by GTP, when glutamine is the substrate; GTP has no effect on the reaction when ammonia is the substrate. The allosteric effector GTP functions by stabilizing the protein conformation that binds the tetrahedral intermediate(s) formed during glutamine hydrolysis. Inhibited by the product CTP, via allosteric rather than competitive inhibition. Catalyzes the ATP-dependent amination of UTP to CTP with either L-glutamine or ammonia as the source of nitrogen. Regulates intracellular CTP levels through interactions with the four ribonucleotide triphosphates. In Variovorax paradoxus (strain S110), this protein is CTP synthase.